A 459-amino-acid chain; its full sequence is FAD-dependent monooxygenase nanF (459 aa).

Positions 49, 62, and 121 each coordinate FAD. Residues arginine 200 and tyrosine 230 contribute to the active site. The FAD site is built by aspartate 327 and glycine 340.

Belongs to the paxM FAD-dependent monooxygenase family. The cofactor is FAD.

It functions in the pathway secondary metabolite biosynthesis. FAD-dependent monooxygenase; part of the gene cluster that mediates the biosynthesis of the benzazepine alkaloid nanangelenin A which contains an unprecedented 3,4-dihydro-1-benzazepine-2,5-dione-N-prenyl-N-acetoxy-anthranilamide scaffold. The first step of nanangelenin biosynthesis is catalyzed by the indoleamine 2,3-dioxygenase nanC which produces N-formyl-kynurenine through the catabolism of tryptophan. The two-module NRPS nanA then utilizes anthranilate (Ant) and L-kynurenine (L-Kyn) to assemble the dipeptide product nanangelenin B. The first adenylation domain of nanA (A1) loads anthranilate onto the T1 domain, while A2 loads kynurenine, generated through spontaneous nonenzymatic deformylation of the nanC-supplied N-formyl-kynurenine. The peptide bond formation between the tethered amino acids is catalyzed by the first condensation domain (C1) between anthranilate's carbonyl carbon and kynurenine's aliphatic primary amine. The second C domain (C2) catalyzes the final cyclization event between the aromatic amine of kynurenine and the tethered carbonyl carbon, yielding nanangelenin B. The terminal T3 domain enhances the catalytic efficiency of C2, suggesting the T2-tethered Ant-L-Kyn is transferred to T3 prior to cyclization by C2. Once released from nanA, nanangelenin B is then prenylated by the prenyltransferase nanD to form nanangelenin C. Nanangelenin C is then N-hydroxylated by the FAD-dependent monooxygenase nanF and further acetylated by the acetyltransferase nanB to yield nanangelenin F. Finally, the N-methyltransferase nanE methylates the amide nitrogen of 1-benzazepine to convert nanangelenin F into nanangelenin A. NanE is also able to methylate most of the intermediates of the pathway such as nanangelenin B and nanangelenin C to produce nanangelenin D and nanangelenin E, respectively. In Aspergillus nanangensis, this protein is FAD-dependent monooxygenase nanF.